Here is a 185-residue protein sequence, read N- to C-terminus: MIDDTLLDAEEKMEKAVSVAKEDFANIRTGRITPAVFSKIVVDYYGAPTPVQQLASFHIPEPRMVIITPYDKSSLASIEKAVRDSDLGVNPSNDGTIIRIVFPELSEQRRRDLVKVARSKAEEARVSIRNVRRHAKDGIDRIVRDGDAGEDEGRRAEKDLDEATHRYVGQVDELLRLKEADLLSV.

It belongs to the RRF family.

The protein resides in the cytoplasm. Responsible for the release of ribosomes from messenger RNA at the termination of protein biosynthesis. May increase the efficiency of translation by recycling ribosomes from one round of translation to another. The chain is Ribosome-recycling factor from Frankia alni (strain DSM 45986 / CECT 9034 / ACN14a).